Reading from the N-terminus, the 619-residue chain is Zinc finger protein 131 (619 aa).

In terms of domain architecture, BTB spans 34–98; it reads TDITLIVDGH…TYTAKLMIQG (65 aa). The Nuclear localization signal 1 motif lies at 137–148; sequence TGKNEAKKRKIA. Ser-231 is subject to Phosphoserine. 3 consecutive C2H2-type zinc fingers follow at residues 261 to 283, 288 to 311, and 328 to 350; these read FHCEKCNRSFKLFYHFKEHMKSH, FKCEICNKRYLRESAWKQHLNCYH, and HICQYCDKQFDHFGHFKEHLRKH. Glycyl lysine isopeptide (Lys-Gly) (interchain with G-Cter in SUMO2) cross-links involve residues Lys-289 and Lys-295. Residues 317–328 carry the Nuclear localization signal 2 motif; that stretch reads VSKKQRTGKKIH. The C2H2-type 4; degenerate zinc finger occupies 356-381; the sequence is FECSNCHERFARNSTLKCHLTACQTG. 2 C2H2-type zinc fingers span residues 392–414 and 420–443; these read YECQVCNSVFNSWDQFKDHLVIH and NHCTLCDLWFMQGNELRRHLSDAH. Composition is skewed to basic and acidic residues over residues 574 to 587 and 595 to 612; these read QEEREPNHADAAME and LETKPSEYSQARKTENDR. A disordered region spans residues 574-619; sequence QEEREPNHADAAMEEHEDAEGLETKPSEYSQARKTENDRTSLPVLE. Lys-598 participates in a covalent cross-link: Glycyl lysine isopeptide (Lys-Gly) (interchain with G-Cter in SUMO).

The protein belongs to the krueppel C2H2-type zinc-finger protein family. Post-translationally, monosumoylated at Lys-598 by CBX4 and UHRF2. Sumoylation may potentiate ZNF131 inhibition of estrogen signaling. Sumoylation does not interfere with ubiquitination. In terms of processing, ubiquitinated. In terms of tissue distribution, ubiquitously expressed. Predominant expression is found in the developing central nervous system with strongest signals in the forebrain, midbrain, and hindbrain areas and in the neural tube.

The protein localises to the nucleus. In terms of biological role, may be involved in transcriptional regulation as a repressor of ESR1/ER-alpha signaling. Plays a role during development and organogenesis as well as in the function of the adult central nervous system. This Mus musculus (Mouse) protein is Zinc finger protein 131 (Znf131).